Here is a 291-residue protein sequence, read N- to C-terminus: tRNA U34 carboxymethyltransferase (291 aa).

Carboxy-S-adenosyl-L-methionine is bound by residues Lys-61, Trp-75, Lys-80, Gly-100, 122–124, 149–150, Tyr-169, and Arg-284; these read DPS and VE.

Belongs to the class I-like SAM-binding methyltransferase superfamily. CmoB family. In terms of assembly, homotetramer.

The catalysed reaction is carboxy-S-adenosyl-L-methionine + 5-hydroxyuridine(34) in tRNA = 5-carboxymethoxyuridine(34) in tRNA + S-adenosyl-L-homocysteine + H(+). Catalyzes carboxymethyl transfer from carboxy-S-adenosyl-L-methionine (Cx-SAM) to 5-hydroxyuridine (ho5U) to form 5-carboxymethoxyuridine (cmo5U) at position 34 in tRNAs. The polypeptide is tRNA U34 carboxymethyltransferase (Campylobacter jejuni subsp. jejuni serotype O:23/36 (strain 81-176)).